Reading from the N-terminus, the 332-residue chain is Flotillin-like protein FloA (332 aa).

Transmembrane regions (helical) follow at residues 6 to 26 and 28 to 48; these read LGYLILTFVVLLLLVLFFSFV and VGLWISAAAADVRVGIFYMIG.

It belongs to the flotillin-like FloA family. Homooligomerizes.

The protein localises to the cell membrane. It localises to the membrane raft. In terms of biological role, found in functional membrane microdomains (FMM) that may be equivalent to eukaryotic membrane rafts. FMMs are highly dynamic and increase in number as cells age. Flotillins are thought to be important factors in membrane fluidity. The sequence is that of Flotillin-like protein FloA from Symbiobacterium thermophilum (strain DSM 24528 / JCM 14929 / IAM 14863 / T).